Reading from the N-terminus, the 1007-residue chain is Rho-type GTPase-activating protein 1 (1007 aa).

LIM zinc-binding domains lie at 13–66 (CVRC…CFDC) and 70–122 (CKNC…CLSC). 3 disordered regions span residues 203-293 (ITGY…KSPS), 401-478 (EKYS…STSL), and 505-600 (KETA…NDPS). Positions 212 to 221 (NSGSSKFGSN) are enriched in low complexity. Composition is skewed to polar residues over residues 250-261 (ANMSLNVATDPT) and 270-293 (HSRN…KSPS). Position 278 is a phosphothreonine (Thr278). Phosphoserine is present on Ser291. Basic residues predominate over residues 411-421 (KGRKISRSLSR). The span at 454-466 (RSQDLMRDNDSHT) shows a compositional bias: basic and acidic residues. Composition is skewed to polar residues over residues 467–478 (GLDTPNSNSTSL) and 529–579 (SPAT…LENS). At Thr532 the chain carries Phosphothreonine. The segment covering 583–600 (EEQKETLYENSESRNDPS) has biased composition (basic and acidic residues). The Rho-GAP domain occupies 791–1006 (SSLVARCNYE…FIFGNYKDIL (216 aa)).

Its function is as follows. GTPase-activating protein (GAP) for CDC42 and/or RHO1. Negative regulator of the pheromone-response pathway through the STE20 protein kinase; acts at a step between the G-protein and the MAP kinase module. Dominant suppressor of bud emergence defect caused by deletion of IPL2/BEM2. Involved in the control of polarized cell growth and proper bud site selection. The polypeptide is Rho-type GTPase-activating protein 1 (RGA1) (Saccharomyces cerevisiae (strain ATCC 204508 / S288c) (Baker's yeast)).